The chain runs to 431 residues: 5-methylthioadenosine/S-adenosylhomocysteine deaminase (431 aa).

Residues histidine 63 and histidine 65 each contribute to the Zn(2+) site. 3 residues coordinate substrate: glutamate 92, arginine 144, and histidine 184. A Zn(2+)-binding site is contributed by histidine 211. Substrate-binding residues include glutamate 214 and aspartate 299. Aspartate 299 serves as a coordination point for Zn(2+).

This sequence belongs to the metallo-dependent hydrolases superfamily. MTA/SAH deaminase family. Zn(2+) is required as a cofactor.

It catalyses the reaction S-adenosyl-L-homocysteine + H2O + H(+) = S-inosyl-L-homocysteine + NH4(+). It carries out the reaction S-methyl-5'-thioadenosine + H2O + H(+) = S-methyl-5'-thioinosine + NH4(+). Functionally, catalyzes the deamination of 5-methylthioadenosine and S-adenosyl-L-homocysteine into 5-methylthioinosine and S-inosyl-L-homocysteine, respectively. Is also able to deaminate adenosine. This is 5-methylthioadenosine/S-adenosylhomocysteine deaminase from Thermoanaerobacter pseudethanolicus (strain ATCC 33223 / 39E) (Clostridium thermohydrosulfuricum).